We begin with the raw amino-acid sequence, 165 residues long: Deoxyuridine 5'-triphosphate nucleotidohydrolase (165 aa).

Residues 66–68, N79, 83–85, and K93 contribute to the substrate site; these read RSG and TVD. Positions 134–165 are disordered; the sequence is ETSRGAGGHGSSGGHASLTPGARSAARVAQEG.

The protein belongs to the dUTPase family. Mg(2+) serves as cofactor.

The enzyme catalyses dUTP + H2O = dUMP + diphosphate + H(+). Its pathway is pyrimidine metabolism; dUMP biosynthesis; dUMP from dCTP (dUTP route): step 2/2. In terms of biological role, this enzyme is involved in nucleotide metabolism: it produces dUMP, the immediate precursor of thymidine nucleotides and it decreases the intracellular concentration of dUTP so that uracil cannot be incorporated into DNA. This Nocardia farcinica (strain IFM 10152) protein is Deoxyuridine 5'-triphosphate nucleotidohydrolase.